A 494-amino-acid polypeptide reads, in one-letter code: tRNA-2-methylthio-N(6)-dimethylallyladenosine synthase (494 aa).

Positions 12 to 131 (PTYRVVTYGC…LPVLLKRARH (120 aa)) constitute an MTTase N-terminal domain. [4Fe-4S] cluster-binding residues include Cys21, Cys60, Cys94, Cys168, Cys172, and Cys175. Residues 154–385 (RDSAYSAWVS…ELVDDIAWQE (232 aa)) form the Radical SAM core domain. The TRAM domain occupies 387-457 (KAQVGRAVEV…PHHLVADGGL (71 aa)).

This sequence belongs to the methylthiotransferase family. MiaB subfamily. In terms of assembly, monomer. It depends on [4Fe-4S] cluster as a cofactor.

Its subcellular location is the cytoplasm. It catalyses the reaction N(6)-dimethylallyladenosine(37) in tRNA + (sulfur carrier)-SH + AH2 + 2 S-adenosyl-L-methionine = 2-methylsulfanyl-N(6)-dimethylallyladenosine(37) in tRNA + (sulfur carrier)-H + 5'-deoxyadenosine + L-methionine + A + S-adenosyl-L-homocysteine + 2 H(+). Catalyzes the methylthiolation of N6-(dimethylallyl)adenosine (i(6)A), leading to the formation of 2-methylthio-N6-(dimethylallyl)adenosine (ms(2)i(6)A) at position 37 in tRNAs that read codons beginning with uridine. This chain is tRNA-2-methylthio-N(6)-dimethylallyladenosine synthase, found in Cutibacterium acnes (strain DSM 16379 / KPA171202) (Propionibacterium acnes).